The chain runs to 218 residues: Non-structural protein NS3 (218 aa).

The protein belongs to the orbivirus NS3 family.

In terms of biological role, may play a role in the release of virions from infected cells. This is Non-structural protein NS3 (Segment-10) from Camelus dromedarius (Dromedary).